The chain runs to 287 residues: MNGILLVDKPVGLTSHDVVEYVRKLFKTKVGHCGTLDPFASGLLVLLIGEATKLSSFFTQTKKTYIATMQFGIKTDTLDITGKVQLRNNIFIEQNEIEDCLKDLKGEVELSVPIYSAKKVKGRKLYEYAREGIDIEIPKIKSIIYSIEMINYCYPYMTFKVECSHGTYIRSLAEEIAKKLSTVATLVQLRRAKNGVFDIKAAFSLDFISEDSIIPLENLILNEIIVNESVYKKLINGNPLTRKDIKEIRLNDSLFEDFYKISMKDAFFVYKREGDKFKYLLKVENYR.

D37 functions as the Nucleophile in the catalytic mechanism.

Belongs to the pseudouridine synthase TruB family. Type 1 subfamily.

The catalysed reaction is uridine(55) in tRNA = pseudouridine(55) in tRNA. Responsible for synthesis of pseudouridine from uracil-55 in the psi GC loop of transfer RNAs. The chain is tRNA pseudouridine synthase B from Caldicellulosiruptor saccharolyticus (strain ATCC 43494 / DSM 8903 / Tp8T 6331).